Here is a 340-residue protein sequence, read N- to C-terminus: Phenylalanine--tRNA ligase alpha subunit (340 aa).

Glutamate 254 provides a ligand contact to Mg(2+).

It belongs to the class-II aminoacyl-tRNA synthetase family. Phe-tRNA synthetase alpha subunit type 1 subfamily. In terms of assembly, tetramer of two alpha and two beta subunits. It depends on Mg(2+) as a cofactor.

It is found in the cytoplasm. The catalysed reaction is tRNA(Phe) + L-phenylalanine + ATP = L-phenylalanyl-tRNA(Phe) + AMP + diphosphate + H(+). The sequence is that of Phenylalanine--tRNA ligase alpha subunit from Caldicellulosiruptor bescii (strain ATCC BAA-1888 / DSM 6725 / KCTC 15123 / Z-1320) (Anaerocellum thermophilum).